The following is a 386-amino-acid chain: Succinate--CoA ligase [ADP-forming] subunit beta (386 aa).

Positions 9 to 244 (KAVLRSYGVS…LDEEDAKEIE (236 aa)) constitute an ATP-grasp domain. Residues K46, 53 to 55 (GRG), E99, C102, and E107 contribute to the ATP site. Mg(2+)-binding residues include N199 and D213. Residues N264 and 321–323 (GIM) each bind substrate.

The protein belongs to the succinate/malate CoA ligase beta subunit family. As to quaternary structure, heterotetramer of two alpha and two beta subunits. Mg(2+) serves as cofactor.

It catalyses the reaction succinate + ATP + CoA = succinyl-CoA + ADP + phosphate. The catalysed reaction is GTP + succinate + CoA = succinyl-CoA + GDP + phosphate. It participates in carbohydrate metabolism; tricarboxylic acid cycle; succinate from succinyl-CoA (ligase route): step 1/1. Its function is as follows. Succinyl-CoA synthetase functions in the citric acid cycle (TCA), coupling the hydrolysis of succinyl-CoA to the synthesis of either ATP or GTP and thus represents the only step of substrate-level phosphorylation in the TCA. The beta subunit provides nucleotide specificity of the enzyme and binds the substrate succinate, while the binding sites for coenzyme A and phosphate are found in the alpha subunit. The sequence is that of Succinate--CoA ligase [ADP-forming] subunit beta from Bacillus anthracis (strain A0248).